The sequence spans 759 residues: NADP-dependent malic enzyme (759 aa).

The tract at residues 1 to 428 (MDDQLKQSAL…KLTEFVYKTN (428 aa)) is malic enzyme. Tyr-39 functions as the Proton donor in the catalytic mechanism. At Lys-56 the chain carries N6-acetyllysine. The active-site Proton acceptor is the Lys-94. Residues Glu-136, Asp-137, and Asp-162 each coordinate a divalent metal cation. Residues 195–198 (AGAA), Asn-288, and Asn-320 contribute to the NADP(+) site. Residues 429-759 (LFMKPIFSQA…AVVEAQTQPL (331 aa)) form a phosphate acetyltransferase; required for oligomerization, inhibition by acetyl-CoA and activation by glutamate, aspartate, and glucose-6-phosphate region.

This sequence in the N-terminal section; belongs to the malic enzymes family. The protein in the C-terminal section; belongs to the phosphate acetyltransferase and butyryltransferase family. In terms of assembly, homooligomer, possibly an octamer. Requires Mg(2+) as cofactor. It depends on Mn(2+) as a cofactor.

The catalysed reaction is (S)-malate + NADP(+) = pyruvate + CO2 + NADPH. The enzyme catalyses oxaloacetate + H(+) = pyruvate + CO2. With respect to regulation, inhibited by 4 mM Mg(2+) and acetyl-CoA, competitively inhibited by fumarate and oxaloacetate. Activated by glutamate and aspartate, glucose-6-phosphate, acetyl-phosphate and 2 mM KCl. Catalyzes the decarboxylation of malate to pyruvate. In vitro, shows malolactic enzyme activity in the presence of NADPH. However, it is unlikely that this activity is of relevance in E.coli, which produces little NADPH. This is NADP-dependent malic enzyme (maeB) from Escherichia coli (strain K12).